Here is a 369-residue protein sequence, read N- to C-terminus: Epoxyqueuosine reductase (369 aa).

Residue aspartate 135 is the Proton donor of the active site. The region spanning 177 to 209 is the 4Fe-4S ferredoxin-type domain; the sequence is IPLPVDEPSENQCGKCTACITSCPTNAIVAEGV. [4Fe-4S] cluster contacts are provided by cysteine 189, cysteine 192, cysteine 195, cysteine 199, cysteine 215, cysteine 242, cysteine 245, and cysteine 249.

This sequence belongs to the QueG family. Monomer. Cob(II)alamin is required as a cofactor. [4Fe-4S] cluster serves as cofactor.

It localises to the cytoplasm. It carries out the reaction epoxyqueuosine(34) in tRNA + AH2 = queuosine(34) in tRNA + A + H2O. The protein operates within tRNA modification; tRNA-queuosine biosynthesis. Its function is as follows. Catalyzes the conversion of epoxyqueuosine (oQ) to queuosine (Q), which is a hypermodified base found in the wobble positions of tRNA(Asp), tRNA(Asn), tRNA(His) and tRNA(Tyr). This chain is Epoxyqueuosine reductase, found in Vibrio cholerae serotype O1 (strain ATCC 39315 / El Tor Inaba N16961).